The primary structure comprises 183 residues: Lipocalin (183 aa).

The signal sequence occupies residues 1–20 (MKGLVLSFALVALSALCVYG). Cys83 and Cys179 form a disulfide bridge.

Belongs to the calycin superfamily. Lipocalin family. Monomer. In terms of tissue distribution, expressed mainly in choroid plexus. Much lower expression in other brain areas, and absent from liver.

It is found in the secreted. Functionally, might have a transport function across the blood brain barrier. Is supposed to have similar functions as a transthyretin which must have evolved after the stage of the amphibians in evolution. This Rhinella marina (Cane toad) protein is Lipocalin.